The following is a 279-amino-acid chain: Phosphatidylglycerol--prolipoprotein diacylglyceryl transferase (279 aa).

Transmembrane regions (helical) follow at residues 18 to 38, 55 to 75, and 89 to 109; these read LSVR…YFVA, IIFY…VIFQ, and IWHG…AGVI. Residue Arg137 coordinates a 1,2-diacyl-sn-glycero-3-phospho-(1'-sn-glycerol). The next 2 membrane-spanning stretches (helical) occupy residues 203–223 and 235–255; these read LGET…FIEG and IRVA…LIVY.

It belongs to the Lgt family.

It localises to the cell membrane. The enzyme catalyses L-cysteinyl-[prolipoprotein] + a 1,2-diacyl-sn-glycero-3-phospho-(1'-sn-glycerol) = an S-1,2-diacyl-sn-glyceryl-L-cysteinyl-[prolipoprotein] + sn-glycerol 1-phosphate + H(+). It participates in protein modification; lipoprotein biosynthesis (diacylglyceryl transfer). Its function is as follows. Catalyzes the transfer of the diacylglyceryl group from phosphatidylglycerol to the sulfhydryl group of the N-terminal cysteine of a prolipoprotein, the first step in the formation of mature lipoproteins. This Staphylococcus aureus (strain MSSA476) protein is Phosphatidylglycerol--prolipoprotein diacylglyceryl transferase.